Reading from the N-terminus, the 96-residue chain is Phosphoribosyl-ATP pyrophosphatase (96 aa).

The protein belongs to the PRA-PH family.

The protein resides in the cytoplasm. The enzyme catalyses 1-(5-phospho-beta-D-ribosyl)-ATP + H2O = 1-(5-phospho-beta-D-ribosyl)-5'-AMP + diphosphate + H(+). It functions in the pathway amino-acid biosynthesis; L-histidine biosynthesis; L-histidine from 5-phospho-alpha-D-ribose 1-diphosphate: step 2/9. This is Phosphoribosyl-ATP pyrophosphatase from Methanococcus aeolicus (strain ATCC BAA-1280 / DSM 17508 / OCM 812 / Nankai-3).